Reading from the N-terminus, the 630-residue chain is UvrABC system protein C (630 aa).

Residues 1 to 96 (MGAEGLQGEG…GEAHRRGGTG (96 aa)) form a disordered region. A compositionally biased stretch (low complexity) spans 9–28 (EGEVPPQGAGVPGQVQVGVH). A GIY-YIG domain is found at 52–125 (DPRGLPVEAG…IKAHRPLYNV (74 aa)). The segment covering 75–91 (RPGEKLLPRRGQGEAHR) has biased composition (basic and acidic residues). In terms of domain architecture, UVR spans 234–269 (DGLLQELEAKMREAARRLEFERAAEIRDQMEALRAF).

It belongs to the UvrC family. Interacts with UvrB in an incision complex.

Its subcellular location is the cytoplasm. Functionally, the UvrABC repair system catalyzes the recognition and processing of DNA lesions. UvrC both incises the 5' and 3' sides of the lesion. The N-terminal half is responsible for the 3' incision and the C-terminal half is responsible for the 5' incision. The protein is UvrABC system protein C of Thermus thermophilus (strain ATCC BAA-163 / DSM 7039 / HB27).